A 180-amino-acid chain; its full sequence is ATP-dependent protease subunit HslV (180 aa).

The active site involves threonine 10. Residues glycine 165, cysteine 168, and threonine 171 each contribute to the Na(+) site.

This sequence belongs to the peptidase T1B family. HslV subfamily. In terms of assembly, a double ring-shaped homohexamer of HslV is capped on each side by a ring-shaped HslU homohexamer. The assembly of the HslU/HslV complex is dependent on binding of ATP.

Its subcellular location is the cytoplasm. The catalysed reaction is ATP-dependent cleavage of peptide bonds with broad specificity.. Its activity is regulated as follows. Allosterically activated by HslU binding. Protease subunit of a proteasome-like degradation complex believed to be a general protein degrading machinery. This Koribacter versatilis (strain Ellin345) protein is ATP-dependent protease subunit HslV.